Reading from the N-terminus, the 90-residue chain is Cell division topological specificity factor (90 aa).

The interval 1–21 (MAGFWSKIFGNDEKPSSAQTA) is disordered. The segment covering 10 to 21 (GNDEKPSSAQTA) has biased composition (basic and acidic residues).

It belongs to the MinE family.

Its function is as follows. Prevents the cell division inhibition by proteins MinC and MinD at internal division sites while permitting inhibition at polar sites. This ensures cell division at the proper site by restricting the formation of a division septum at the midpoint of the long axis of the cell. The protein is Cell division topological specificity factor of Acinetobacter baylyi (strain ATCC 33305 / BD413 / ADP1).